Consider the following 92-residue polypeptide: Putative defensin-like protein 251 (92 aa).

The first 27 residues, 1–27 (MRCVTSFVVFCILMFFVLNIFTVEVKA), serve as a signal peptide directing secretion. Cystine bridges form between Cys34/Cys90, Cys45/Cys69, Cys53/Cys82, and Cys67/Cys84.

This sequence belongs to the DEFL family.

Its subcellular location is the secreted. This is Putative defensin-like protein 251 (SCRL12) from Arabidopsis thaliana (Mouse-ear cress).